A 64-amino-acid polypeptide reads, in one-letter code: NPSSPPVVDTTNTTSYPPMCSQDAVGGQVLENIPLQEDCLYNFNTVPYIVGIIPEDIIPVAIEK.

This sequence belongs to the type-B carboxylesterase/lipase family. In terms of assembly, monomer and homotrimer.

It localises to the microsome. It is found in the endoplasmic reticulum. The catalysed reaction is hexadecanoyl-CoA + H2O = hexadecanoate + CoA + H(+). Its function is as follows. Hydrolysis of a variety of CoA thioesters of long-chain fatty acids. This chain is Palmitoyl-CoA hydrolase, found in Rattus norvegicus (Rat).